Reading from the N-terminus, the 291-residue chain is Mitochondrial thiamine pyrophosphate carrier 1 (291 aa).

A run of 6 helical transmembrane segments spans residues 12–31 (GATA…GAVA), 83–99 (IMYI…YSMF), 120–141 (SLIV…FDLL), 167–191 (GGLA…GLMF), 214–230 (FCGF…TFPL), and 265–282 (GFGI…VSLF). Solcar repeat units follow at residues 15 to 102 (ASVY…FSKA), 115 to 200 (RPSN…AREV), and 207 to 290 (NIPF…VLNG).

Belongs to the mitochondrial carrier (TC 2.A.29) family.

It is found in the mitochondrion inner membrane. In terms of biological role, mitochondrial transporter that mediates uptake of thiamine pyrophosphate (ThPP) into mitochondria. This chain is Mitochondrial thiamine pyrophosphate carrier 1 (TPC1), found in Meyerozyma guilliermondii (strain ATCC 6260 / CBS 566 / DSM 6381 / JCM 1539 / NBRC 10279 / NRRL Y-324) (Yeast).